The following is a 371-amino-acid chain: Histidinol-phosphate aminotransferase (371 aa).

N6-(pyridoxal phosphate)lysine is present on lysine 221.

It belongs to the class-II pyridoxal-phosphate-dependent aminotransferase family. Histidinol-phosphate aminotransferase subfamily. As to quaternary structure, homodimer. The cofactor is pyridoxal 5'-phosphate.

It catalyses the reaction L-histidinol phosphate + 2-oxoglutarate = 3-(imidazol-4-yl)-2-oxopropyl phosphate + L-glutamate. It participates in amino-acid biosynthesis; L-histidine biosynthesis; L-histidine from 5-phospho-alpha-D-ribose 1-diphosphate: step 7/9. The polypeptide is Histidinol-phosphate aminotransferase (Pseudoalteromonas atlantica (strain T6c / ATCC BAA-1087)).